We begin with the raw amino-acid sequence, 517 residues long: Ammonium transporter 3 (517 aa).

Residues 1–32 (MLNEPNALLRRDANSTIATVTELFPNEYSNAD) lie on the Extracellular side of the membrane. Residues 33-53 (IAYVLLSTVVVFTVTPGIALY) form a helical membrane-spanning segment. Over 54-69 (YAGMVRKNSALSILTQ) the chain is Cytoplasmic. A helical membrane pass occupies residues 70–90 (SFLVTAVVFIQWYLFGYSLAC). The Extracellular portion of the chain corresponds to 91–118 (SSGSSFYGTLWQGGMNHLWLEPYIPGST). The chain crosses the membrane as a helical span at residues 119–139 (IPAIVYFPFGGLFAVATAQLF). At 140 to 148 (AGAMAERGR) the chain is on the cytoplasmic side. The chain crosses the membrane as a helical span at residues 149-169 (LIPSLVISFLYITLVYCPQAY). Residues 170-180 (WTWAPNGWLYT) are Extracellular-facing. The chain crosses the membrane as a helical span at residues 181–201 (LGALDFAGGGPVHISSGFAAL). Residues 202-272 (AYSLCLGRRI…AHNPPHDAGM (71 aa)) are Cytoplasmic-facing. Residues 273 to 293 (VYIGVVLIWFAWLCFNSGTLL) form a helical membrane-spanning segment. Residues 294-299 (TVNIRT) are Extracellular-facing. Residues 300–320 (AYIMTNTLISSSFGALTWAII) form a helical membrane-spanning segment. Residues 321–327 (DYIRYRK) are Cytoplasmic-facing. A helical membrane pass occupies residues 328 to 348 (FSTIGICEGAIAGLVGITPAC). Glycine 349 is a topological domain (extracellular). Residues 350–370 (FVFPWGAAAGGIVPALVCNFL) form a helical membrane-spanning segment. The Cytoplasmic portion of the chain corresponds to 371-384 (HDLNEWIGVDETLR). A helical transmembrane segment spans residues 385–405 (VFNLHGIGGIVGSIVLGVVAH). Residues 406–432 (PDVAASDGATVIDGGWAVHHWKQMGYQ) lie on the Extracellular side of the membrane. A helical membrane pass occupies residues 433-453 (FAGFTSVAAWSFVITAIICLL). At 454-517 (VDLVPGLHIR…NIKQEKQDEF (64 aa)) the chain is on the cytoplasmic side.

This sequence belongs to the ammonia transporter channel (TC 1.A.11.2) family.

The protein resides in the membrane. Functionally, transporter for ammonium to use as a nitrogen source. In Schizosaccharomyces pombe (strain 972 / ATCC 24843) (Fission yeast), this protein is Ammonium transporter 3 (amt3).